A 656-amino-acid polypeptide reads, in one-letter code: PAN2-PAN3 deadenylation complex subunit pan3 (656 aa).

2 disordered regions span residues Met-1 to Asp-24 and Ser-75 to Asn-117. A C3H1-type zinc finger spans residues Asp-24–Asn-53. A PABPC-interacting motif-2 (PAM-2) motif is present at residues Asn-63–Gln-83. Polar residues-rich tracts occupy residues Ser-75–Ala-96 and Gly-107–Asn-117. Residues Gln-251–Thr-514 form a pseudokinase domain region. ATP is bound by residues Thr-275–Cys-280, Arg-302, Asp-352–Thr-359, and Ser-412–Lys-413. Positions Thr-515–Val-553 form a coiled coil. A knob domain region spans residues Val-554–Ile-656.

The protein belongs to the protein kinase superfamily. PAN3 family. Homodimer. Forms a heterotrimer with a catalytic subunit par-1/pan2 to form the poly(A)-nuclease (PAN) deadenylation complex. Interacts (via PAM-2 motif) with poly(A)-binding protein pabp-1 (via PABC domain), conferring substrate specificity of the enzyme complex.

The protein resides in the cytoplasm. In terms of biological role, regulatory subunit of the poly(A)-nuclease (PAN) deadenylation complex, one of two cytoplasmic mRNA deadenylases involved in mRNA turnover. PAN specifically shortens poly(A) tails of RNA and the activity is stimulated by poly(A)-binding protein pabp-1. PAN deadenylation is followed by rapid degradation of the shortened mRNA tails by the CCR4-NOT complex. Deadenylated mRNAs are then degraded by two alternative mechanisms, namely exosome-mediated 3'-5' exonucleolytic degradation, or deadenylation-dependent mRNA decaping and subsequent 5'-3' exonucleolytic degradation by rgb-30/xrn1. May also be involved in post-transcriptional maturation of mRNA poly(A) tails. par-2/pan3 acts as a positive regulator for PAN activity, recruiting the catalytic subunit par-1/pan2 to mRNA via its interaction with RNA and with pabp-1. The protein is PAN2-PAN3 deadenylation complex subunit pan3 (par-2) of Neurospora crassa (strain ATCC 24698 / 74-OR23-1A / CBS 708.71 / DSM 1257 / FGSC 987).